Consider the following 546-residue polypeptide: Glucose-6-phosphate isomerase (546 aa).

Glu-358 (proton donor) is an active-site residue. Residues His-389 and Lys-504 contribute to the active site.

This sequence belongs to the GPI family.

It localises to the cytoplasm. The catalysed reaction is alpha-D-glucose 6-phosphate = beta-D-fructose 6-phosphate. The protein operates within carbohydrate biosynthesis; gluconeogenesis. Its pathway is carbohydrate degradation; glycolysis; D-glyceraldehyde 3-phosphate and glycerone phosphate from D-glucose: step 2/4. Functionally, catalyzes the reversible isomerization of glucose-6-phosphate to fructose-6-phosphate. The sequence is that of Glucose-6-phosphate isomerase from Desulfosudis oleivorans (strain DSM 6200 / JCM 39069 / Hxd3) (Desulfococcus oleovorans).